We begin with the raw amino-acid sequence, 412 residues long: Imidazolonepropionase (412 aa).

Fe(3+) is bound by residues His-76 and His-78. Zn(2+) contacts are provided by His-76 and His-78. 4-imidazolone-5-propanoate contacts are provided by Arg-85, Tyr-148, and His-181. Tyr-148 contacts N-formimidoyl-L-glutamate. His-242 lines the Fe(3+) pocket. His-242 serves as a coordination point for Zn(2+). A 4-imidazolone-5-propanoate-binding site is contributed by Glu-245. Fe(3+) is bound at residue Asp-317. Position 317 (Asp-317) interacts with Zn(2+). 2 residues coordinate N-formimidoyl-L-glutamate: Asn-319 and Gly-321. Residue Ser-322 participates in 4-imidazolone-5-propanoate binding.

Belongs to the metallo-dependent hydrolases superfamily. HutI family. Zn(2+) is required as a cofactor. It depends on Fe(3+) as a cofactor.

The protein localises to the cytoplasm. It catalyses the reaction 4-imidazolone-5-propanoate + H2O = N-formimidoyl-L-glutamate. The protein operates within amino-acid degradation; L-histidine degradation into L-glutamate; N-formimidoyl-L-glutamate from L-histidine: step 3/3. Functionally, catalyzes the hydrolytic cleavage of the carbon-nitrogen bond in imidazolone-5-propanoate to yield N-formimidoyl-L-glutamate. It is the third step in the universal histidine degradation pathway. The chain is Imidazolonepropionase from Staphylococcus aureus (strain Mu50 / ATCC 700699).